A 670-amino-acid polypeptide reads, in one-letter code: DNA ligase (670 aa).

NAD(+) contacts are provided by residues 34–38, 83–84, and Glu-113; these read DFEFD and SL. Lys-115 acts as the N6-AMP-lysine intermediate in catalysis. Arg-136, Glu-173, Lys-288, and Lys-312 together coordinate NAD(+). Zn(2+)-binding residues include Cys-406, Cys-409, Cys-424, and Cys-430. In terms of domain architecture, BRCT spans 591–670; it reads PESDKFAGKS…EAEFISLLNS (80 aa).

It belongs to the NAD-dependent DNA ligase family. LigA subfamily. Mg(2+) is required as a cofactor. Requires Mn(2+) as cofactor.

It carries out the reaction NAD(+) + (deoxyribonucleotide)n-3'-hydroxyl + 5'-phospho-(deoxyribonucleotide)m = (deoxyribonucleotide)n+m + AMP + beta-nicotinamide D-nucleotide.. Its function is as follows. DNA ligase that catalyzes the formation of phosphodiester linkages between 5'-phosphoryl and 3'-hydroxyl groups in double-stranded DNA using NAD as a coenzyme and as the energy source for the reaction. It is essential for DNA replication and repair of damaged DNA. This chain is DNA ligase, found in Cytophaga hutchinsonii (strain ATCC 33406 / DSM 1761 / CIP 103989 / NBRC 15051 / NCIMB 9469 / D465).